The primary structure comprises 1048 residues: Anguibactin system regulator (1048 aa).

The Carrier domain maps to proline 965–arginine 1039.

It belongs to the ATP-dependent AMP-binding enzyme family.

It functions in the pathway siderophore biosynthesis; anguibactin biosynthesis. Functionally, bifunctional protein that plays an essential role in virulence. Plays a role in both production of the siderophore anguibactin and regulation of iron transport genes. The protein is Anguibactin system regulator (angR) of Vibrio anguillarum (strain ATCC 68554 / 775) (Listonella anguillarum).